The chain runs to 258 residues: MSDQLKIADKTFTSRLFTGTGKFATGEEMFHALQASGSELVTVALRRIDIDGQEDDILKWLKKGNFNLLPNTSGARNAKEAVFAATLAREALGTNWLKLEIHPDPKYLMPDPIETLKAAEELVKAGFVVLPYIHADPVLCKRLEEVGCAAVMPLGSPIGSNKGLRTRDFLEIIIEQSNVPVIVDAGIGAPSQAAEAMELGAAAVLVNTAMAVAGDTKAMGKAFGMAVEAGRMAHLAKLAPVSNAAHASSPLLSFLNDL.

Residue Lys98 is the Schiff-base intermediate with DXP of the active site. Residues Gly159, 185 to 186 (AG), and 207 to 208 (NT) contribute to the 1-deoxy-D-xylulose 5-phosphate site.

The protein belongs to the ThiG family. Homotetramer. Forms heterodimers with either ThiH or ThiS.

The protein localises to the cytoplasm. It catalyses the reaction [ThiS sulfur-carrier protein]-C-terminal-Gly-aminoethanethioate + 2-iminoacetate + 1-deoxy-D-xylulose 5-phosphate = [ThiS sulfur-carrier protein]-C-terminal Gly-Gly + 2-[(2R,5Z)-2-carboxy-4-methylthiazol-5(2H)-ylidene]ethyl phosphate + 2 H2O + H(+). It participates in cofactor biosynthesis; thiamine diphosphate biosynthesis. Functionally, catalyzes the rearrangement of 1-deoxy-D-xylulose 5-phosphate (DXP) to produce the thiazole phosphate moiety of thiamine. Sulfur is provided by the thiocarboxylate moiety of the carrier protein ThiS. In vitro, sulfur can be provided by H(2)S. This chain is Thiazole synthase, found in Cytophaga hutchinsonii (strain ATCC 33406 / DSM 1761 / CIP 103989 / NBRC 15051 / NCIMB 9469 / D465).